A 401-amino-acid chain; its full sequence is Nicotinate phosphoribosyltransferase (401 aa).

Position 221 is a phosphohistidine; by autocatalysis (His-221).

The protein belongs to the NAPRTase family. Post-translationally, transiently phosphorylated on a His residue during the reaction cycle. Phosphorylation strongly increases the affinity for substrates and increases the rate of nicotinate D-ribonucleotide production. Dephosphorylation regenerates the low-affinity form of the enzyme, leading to product release.

The catalysed reaction is nicotinate + 5-phospho-alpha-D-ribose 1-diphosphate + ATP + H2O = nicotinate beta-D-ribonucleotide + ADP + phosphate + diphosphate. It functions in the pathway cofactor biosynthesis; NAD(+) biosynthesis; nicotinate D-ribonucleotide from nicotinate: step 1/1. Its function is as follows. Catalyzes the synthesis of beta-nicotinate D-ribonucleotide from nicotinate and 5-phospho-D-ribose 1-phosphate at the expense of ATP. In Pectobacterium atrosepticum (strain SCRI 1043 / ATCC BAA-672) (Erwinia carotovora subsp. atroseptica), this protein is Nicotinate phosphoribosyltransferase.